Here is a 1267-residue protein sequence, read N- to C-terminus: Ankyrin repeat and ELMO domain-containing protein D (1267 aa).

Residues 307–466 (SHQRLLETLW…FVSGLASEVL (160 aa)) form the ELMO domain. Over residues 486 to 496 (KKKEKKSEKRG) the composition is skewed to basic and acidic residues. A disordered region spans residues 486–598 (KKKEKKSEKR…NNHILNNNHL (113 aa)). A compositionally biased stretch (low complexity) spans 507-598 (GSNGNINSTT…NNHILNNNHL (92 aa)). ANK repeat units follow at residues 655–685 (DGNSPLHSAIMNSMTLDCITNGININLFLNT), 689–718 (QGLTPLNLACSISPYLIIDFFLQQDTDPFI), 767–796 (TLETPLSTAIQSGNEDSVGHLLTLCPNINN), and 801–830 (SGQNALHIAISKRNLHIITCLIQNGADPSI). Disordered stretches follow at residues 854-908 (NPTK…NSTS), 924-1040 (TSIN…SPIF), 1057-1082 (SPTQESPQVISTPTSPPYLSNNNGAE), and 1103-1215 (ENLT…PPKD). Composition is skewed to low complexity over residues 859–870 (SRSTSSTSSSTS), 895–908 (ITNNNSIQYSNSTS), and 924–1033 (TSIN…STSP). Polar residues predominate over residues 1057–1080 (SPTQESPQVISTPTSPPYLSNNNG). Composition is skewed to low complexity over residues 1108–1176 (NSGN…IGSH) and 1184–1213 (HNGPINNGNYPNYRGNNITTSPVGVTVTPP).

The sequence is that of Ankyrin repeat and ELMO domain-containing protein D (elmoD) from Dictyostelium discoideum (Social amoeba).